Here is a 443-residue protein sequence, read N- to C-terminus: Proline--tRNA ligase (443 aa).

The protein belongs to the class-II aminoacyl-tRNA synthetase family. ProS type 2 subfamily. Homodimer.

The protein resides in the cytoplasm. The catalysed reaction is tRNA(Pro) + L-proline + ATP = L-prolyl-tRNA(Pro) + AMP + diphosphate. Functionally, catalyzes the attachment of proline to tRNA(Pro) in a two-step reaction: proline is first activated by ATP to form Pro-AMP and then transferred to the acceptor end of tRNA(Pro). This is Proline--tRNA ligase from Zymomonas mobilis subsp. mobilis (strain ATCC 10988 / DSM 424 / LMG 404 / NCIMB 8938 / NRRL B-806 / ZM1).